Consider the following 364-residue polypeptide: Cobalt-precorrin-5B C(1)-methyltransferase (364 aa).

This sequence belongs to the CbiD family.

The enzyme catalyses Co-precorrin-5B + S-adenosyl-L-methionine = Co-precorrin-6A + S-adenosyl-L-homocysteine. It functions in the pathway cofactor biosynthesis; adenosylcobalamin biosynthesis; cob(II)yrinate a,c-diamide from sirohydrochlorin (anaerobic route): step 6/10. In terms of biological role, catalyzes the methylation of C-1 in cobalt-precorrin-5B to form cobalt-precorrin-6A. In Pseudomonas putida (strain GB-1), this protein is Cobalt-precorrin-5B C(1)-methyltransferase.